Here is a 421-residue protein sequence, read N- to C-terminus: Synaptotagmin-12 (421 aa).

Over 1-18 the chain is Vesicular; it reads MAVDVTEYHLSVIKSPPG. The chain crosses the membrane as a helical span at residues 19-39; it reads WEVGVYAAGALALLGIAAVSL. The Cytoplasmic segment spans residues 40–421; it reads WKLWTSGSFP…VSMWHPVRRN (382 aa). Serine 97 carries the post-translational modification Phosphoserine; by PKA. Residues serine 99 and serine 214 each carry the phosphoserine modification. 2 C2 domains span residues 152-272 and 283-416; these read TLGQ…SGWL and AVGE…SMWH.

This sequence belongs to the synaptotagmin family. Homodimer. Can also form heterodimers. Interacts with SYT1. In terms of processing, phosphorylation of Ser-97 is required for mossy-fiber long-term potentiation. In terms of tissue distribution, expressed in the brain, specifically by neurons in the hippocampus, and in the adrenal medulla (at protein level).

It localises to the cytoplasmic vesicle. The protein localises to the secretory vesicle. Its subcellular location is the synaptic vesicle membrane. In terms of biological role, synaptic vesicle phosphoprotein that enhances spontaneous neurotransmitter release but does not effect induced neurotransmitter release. Unlike other synaptotagmins, it does not bind Ca(2+) or phospholipids. Essential for mossy-fiber long-term potentiation in the hippocampus. This Mus musculus (Mouse) protein is Synaptotagmin-12.